The primary structure comprises 444 residues: Maintenance of mitochondrial morphology protein 1 (444 aa).

The Lumenal portion of the chain corresponds to 1-110 (MNNLDNLAGN…SFSGWSFIEG (110 aa)). A helical membrane pass occupies residues 111–131 (FIIGQFSVIIVLIFFIKFFVF). Over 132–444 (SDGSSSNSSN…TDDVPLSKAE (313 aa)) the chain is Cytoplasmic. The region spanning 207 to 419 (PSESLDWFNV…EPRFQCIRLP (213 aa)) is the SMP-LTD domain.

It belongs to the MMM1 family. In terms of assembly, homodimer. Component of the ER-mitochondria encounter structure (ERMES) or MDM complex, composed of MMM1, MDM10, MDM12 and MDM34. An MMM1 homodimer associates with one molecule of MDM12 on each side in a pairwise head-to-tail manner, and the SMP-LTD domains of MMM1 and MDM12 generate a continuous hydrophobic tunnel for phospholipid trafficking.

Its subcellular location is the endoplasmic reticulum membrane. Its function is as follows. Component of the ERMES/MDM complex, which serves as a molecular tether to connect the endoplasmic reticulum (ER) and mitochondria. Components of this complex are involved in the control of mitochondrial shape and protein biogenesis, and function in nonvesicular lipid trafficking between the ER and mitochondria. The MDM12-MMM1 subcomplex functions in the major beta-barrel assembly pathway that is responsible for biogenesis of all outer membrane beta-barrel proteins, and acts in a late step after the SAM complex. The MDM10-MDM12-MMM1 subcomplex further acts in the TOM40-specific pathway after the action of the MDM12-MMM1 complex. Essential for establishing and maintaining the structure of mitochondria and maintenance of mtDNA nucleoids. The chain is Maintenance of mitochondrial morphology protein 1 from Vanderwaltozyma polyspora (strain ATCC 22028 / DSM 70294 / BCRC 21397 / CBS 2163 / NBRC 10782 / NRRL Y-8283 / UCD 57-17) (Kluyveromyces polysporus).